The chain runs to 363 residues: S-adenosylmethionine decarboxylase proenzyme (363 aa).

Active-site residues include glutamate 9 and glutamate 12. Serine 69 functions as the Schiff-base intermediate with substrate; via pyruvic acid in the catalytic mechanism. Serine 69 bears the Pyruvic acid (Ser); by autocatalysis mark. Cysteine 83 functions as the Proton donor; for catalytic activity in the catalytic mechanism. Catalysis depends on proton acceptor; for processing activity residues serine 232 and histidine 245.

This sequence belongs to the eukaryotic AdoMetDC family. Pyruvate is required as a cofactor. Is synthesized initially as an inactive proenzyme. Formation of the active enzyme involves a self-maturation process in which the active site pyruvoyl group is generated from an internal serine residue via an autocatalytic post-translational modification. Two non-identical subunits are generated from the proenzyme in this reaction, and the pyruvate is formed at the N-terminus of the alpha chain, which is derived from the carboxyl end of the proenzyme. The post-translation cleavage follows an unusual pathway, termed non-hydrolytic serinolysis, in which the side chain hydroxyl group of the serine supplies its oxygen atom to form the C-terminus of the beta chain, while the remainder of the serine residue undergoes an oxidative deamination to produce ammonia and the pyruvoyl group blocking the N-terminus of the alpha chain.

It catalyses the reaction S-adenosyl-L-methionine + H(+) = S-adenosyl 3-(methylsulfanyl)propylamine + CO2. It participates in amine and polyamine biosynthesis; S-adenosylmethioninamine biosynthesis; S-adenosylmethioninamine from S-adenosyl-L-methionine: step 1/1. This Spinacia oleracea (Spinach) protein is S-adenosylmethionine decarboxylase proenzyme (SAMDC).